Consider the following 380-residue polypeptide: Succinyl-diaminopimelate desuccinylase (380 aa).

H69 provides a ligand contact to Zn(2+). D71 is an active-site residue. A Zn(2+)-binding site is contributed by D102. The active-site Proton acceptor is E135. Residues E136, E164, and H353 each coordinate Zn(2+).

This sequence belongs to the peptidase M20A family. DapE subfamily. Homodimer. The cofactor is Zn(2+). Requires Co(2+) as cofactor.

It catalyses the reaction N-succinyl-(2S,6S)-2,6-diaminopimelate + H2O = (2S,6S)-2,6-diaminopimelate + succinate. The protein operates within amino-acid biosynthesis; L-lysine biosynthesis via DAP pathway; LL-2,6-diaminopimelate from (S)-tetrahydrodipicolinate (succinylase route): step 3/3. Its function is as follows. Catalyzes the hydrolysis of N-succinyl-L,L-diaminopimelic acid (SDAP), forming succinate and LL-2,6-diaminopimelate (DAP), an intermediate involved in the bacterial biosynthesis of lysine and meso-diaminopimelic acid, an essential component of bacterial cell walls. The chain is Succinyl-diaminopimelate desuccinylase from Cereibacter sphaeroides (strain ATCC 17029 / ATH 2.4.9) (Rhodobacter sphaeroides).